The sequence spans 368 residues: 3-dehydroquinate synthase (368 aa).

Residues 69–74, 103–107, 127–128, lysine 140, and lysine 149 contribute to the NAD(+) site; these read DGEAYK, GVIGD, and TT. Positions 182, 245, and 262 each coordinate Zn(2+).

The protein belongs to the sugar phosphate cyclases superfamily. Dehydroquinate synthase family. Co(2+) is required as a cofactor. It depends on Zn(2+) as a cofactor. NAD(+) serves as cofactor.

The protein resides in the cytoplasm. It carries out the reaction 7-phospho-2-dehydro-3-deoxy-D-arabino-heptonate = 3-dehydroquinate + phosphate. The protein operates within metabolic intermediate biosynthesis; chorismate biosynthesis; chorismate from D-erythrose 4-phosphate and phosphoenolpyruvate: step 2/7. Functionally, catalyzes the conversion of 3-deoxy-D-arabino-heptulosonate 7-phosphate (DAHP) to dehydroquinate (DHQ). The chain is 3-dehydroquinate synthase from Pseudomonas aeruginosa (strain LESB58).